We begin with the raw amino-acid sequence, 183 residues long: Protein US32 (183 aa).

This sequence belongs to the herpesviridae US1 family.

This Homo sapiens (Human) protein is Protein US32 (US32).